Reading from the N-terminus, the 272-residue chain is Shikimate dehydrogenase (NADP(+)) (272 aa).

Residues 20–22 and Thr-67 each bind shikimate; that span reads TMS. Catalysis depends on Lys-71, which acts as the Proton acceptor. Glu-83 contacts NADP(+). Positions 92 and 107 each coordinate shikimate. NADP(+)-binding positions include 129–133, 153–158, and Leu-216; these read GAGGA and NRTKSK. Residue Tyr-218 participates in shikimate binding. Gly-239 contacts NADP(+).

Belongs to the shikimate dehydrogenase family. In terms of assembly, homodimer.

It catalyses the reaction shikimate + NADP(+) = 3-dehydroshikimate + NADPH + H(+). It participates in metabolic intermediate biosynthesis; chorismate biosynthesis; chorismate from D-erythrose 4-phosphate and phosphoenolpyruvate: step 4/7. Functionally, involved in the biosynthesis of the chorismate, which leads to the biosynthesis of aromatic amino acids. Catalyzes the reversible NADPH linked reduction of 3-dehydroshikimate (DHSA) to yield shikimate (SA). This Maridesulfovibrio salexigens (strain ATCC 14822 / DSM 2638 / NCIMB 8403 / VKM B-1763) (Desulfovibrio salexigens) protein is Shikimate dehydrogenase (NADP(+)).